The sequence spans 273 residues: Dermonecrotic toxin LhSicTox-alphaIA2aii (273 aa).

Residue His5 is part of the active site. Mg(2+) contacts are provided by Glu25 and Asp27. Catalysis depends on His41, which acts as the Nucleophile. Cystine bridges form between Cys45/Cys51 and Cys47/Cys190. Asp85 provides a ligand contact to Mg(2+).

The protein belongs to the arthropod phospholipase D family. Class II subfamily. Mg(2+) is required as a cofactor. As to expression, expressed by the venom gland.

The protein resides in the secreted. It catalyses the reaction an N-(acyl)-sphingosylphosphocholine = an N-(acyl)-sphingosyl-1,3-cyclic phosphate + choline. It carries out the reaction an N-(acyl)-sphingosylphosphoethanolamine = an N-(acyl)-sphingosyl-1,3-cyclic phosphate + ethanolamine. The enzyme catalyses a 1-acyl-sn-glycero-3-phosphocholine = a 1-acyl-sn-glycero-2,3-cyclic phosphate + choline. The catalysed reaction is a 1-acyl-sn-glycero-3-phosphoethanolamine = a 1-acyl-sn-glycero-2,3-cyclic phosphate + ethanolamine. Functionally, dermonecrotic toxins cleave the phosphodiester linkage between the phosphate and headgroup of certain phospholipids (sphingolipid and lysolipid substrates), forming an alcohol (often choline) and a cyclic phosphate. This toxin acts on sphingomyelin (SM). It may also act on ceramide phosphoethanolamine (CPE), lysophosphatidylcholine (LPC) and lysophosphatidylethanolamine (LPE), but not on lysophosphatidylserine (LPS), and lysophosphatidylglycerol (LPG). It acts by transphosphatidylation, releasing exclusively cyclic phosphate products as second products. Induces dermonecrosis, hemolysis, increased vascular permeability, edema, inflammatory response, and platelet aggregation. The sequence is that of Dermonecrotic toxin LhSicTox-alphaIA2aii from Loxosceles hirsuta (Recluse spider).